The chain runs to 209 residues: Small ribosomal subunit protein uS4 (209 aa).

Basic residues predominate over residues 1-13 (MSTKSRTRSKTRL). Disordered stretches follow at residues 1–20 (MSTK…LGIP) and 28–49 (YLEK…QDSD). Residues 95 to 176 (QRLDALVVRS…PKLPSYLEVE (82 aa)) enclose the S4 RNA-binding domain.

This sequence belongs to the universal ribosomal protein uS4 family. As to quaternary structure, part of the 30S ribosomal subunit. Contacts protein S5. The interaction surface between S4 and S5 is involved in control of translational fidelity.

Its function is as follows. One of the primary rRNA binding proteins, it binds directly to 16S rRNA where it nucleates assembly of the body of the 30S subunit. With S5 and S12 plays an important role in translational accuracy. The sequence is that of Small ribosomal subunit protein uS4 from Clavibacter michiganensis subsp. michiganensis (strain NCPPB 382).